Consider the following 142-residue polypeptide: Peptidyl-prolyl cis-trans isomerase FKBP2 (142 aa).

The first 21 residues, methionine 1–threonine 21, serve as a signal peptide directing secretion. Residues glycine 49–glutamate 137 form the PPIase FKBP-type domain. A Prevents secretion from ER motif is present at residues arginine 139–leucine 142.

The protein belongs to the FKBP-type PPIase family. FKBP2 subfamily. In terms of assembly, interacts with ARFGEF1/BIG1 and the C-terminal of EPB41L2. As to expression, T-cells and thymus.

It localises to the endoplasmic reticulum membrane. It catalyses the reaction [protein]-peptidylproline (omega=180) = [protein]-peptidylproline (omega=0). Its activity is regulated as follows. Inhibited by both FK506 and rapamycin. Its function is as follows. PPIases accelerate the folding of proteins. It catalyzes the cis-trans isomerization of proline imidic peptide bonds in oligopeptides. This is Peptidyl-prolyl cis-trans isomerase FKBP2 (FKBP2) from Homo sapiens (Human).